Here is a 424-residue protein sequence, read N- to C-terminus: Tubby protein homolog 1 (424 aa).

The segment at 19–47 (MLEDKQKQKRHQSAGSVRTTTTTSSMSMN) is disordered. The span at 37-47 (TTTTTSSMSMN) shows a compositional bias: low complexity.

It belongs to the TUB family. As to quaternary structure, interacts with rgb-3.

The protein localises to the cytoplasm. It is found in the cell projection. Its subcellular location is the axon. The protein resides in the dendrite. It localises to the cilium. In terms of biological role, has a role in fat regulation independent of daf-16. Implicated in ciliar sensory function which is required for normal sensory behavior such as chemotaxis. Functions in life span control via the insulin/IGF-1 pathway. Thought to be involved in neuronal trafficking. The protein is Tubby protein homolog 1 of Caenorhabditis briggsae.